Here is a 456-residue protein sequence, read N- to C-terminus: Probable serine/threonine-protein kinase DDB_G0277449 (456 aa).

Residues 50-83 (STSPTECEESSSSTITTPSEESLSSGEESSSISD) show a composition bias toward low complexity. Positions 50–84 (STSPTECEESSSSTITTPSEESLSSGEESSSISDS) are disordered. In terms of domain architecture, Protein kinase spans 128 to 383 (FIIKHLVGKG…AIEIKRHPFF (256 aa)). ATP contacts are provided by residues 134 to 142 (VGKGGFGKV) and Lys-157. Asp-251 (proton acceptor) is an active-site residue. Positions 384–455 (KSIQWRKIEN…VRTPVLLESQ (72 aa)) constitute an AGC-kinase C-terminal domain.

Belongs to the protein kinase superfamily. AGC Ser/Thr protein kinase family.

The catalysed reaction is L-seryl-[protein] + ATP = O-phospho-L-seryl-[protein] + ADP + H(+). It carries out the reaction L-threonyl-[protein] + ATP = O-phospho-L-threonyl-[protein] + ADP + H(+). The sequence is that of Probable serine/threonine-protein kinase DDB_G0277449 from Dictyostelium discoideum (Social amoeba).